The following is a 389-amino-acid chain: Elongation factor Tu-3 (389 aa).

The region spanning 10–203 (KPHLNIGTMG…AVDTYVPMPE (194 aa)) is the tr-type G domain. A G1 region spans residues 19 to 26 (GHVDHGKT). 19 to 26 (GHVDHGKT) is a binding site for GTP. Thr26 contributes to the Mg(2+) binding site. Positions 60–64 (GITIN) are G2. Positions 81 to 84 (DMPG) are G3. GTP is bound by residues 81–85 (DMPGH) and 136–139 (NKAD). The tract at residues 136 to 139 (NKAD) is G4. The segment at 173 to 175 (SGL) is G5.

The protein belongs to the TRAFAC class translation factor GTPase superfamily. Classic translation factor GTPase family. EF-Tu/EF-1A subfamily. As to quaternary structure, monomer.

Its subcellular location is the cytoplasm. It catalyses the reaction GTP + H2O = GDP + phosphate + H(+). In terms of biological role, GTP hydrolase that promotes the GTP-dependent binding of aminoacyl-tRNA to the A-site of ribosomes during protein biosynthesis. The protein is Elongation factor Tu-3 of Streptomyces ramocissimus.